The sequence spans 488 residues: MNGNKIRTRFAPSPTGYMHVGNLRTALYAYLIAKHENGDFLLRIEDTDQERQVEGALDIIYNTLKMTGIHHDEGPDIGGPVGPYVQSERKHIYTEYAQKLIDKGEAYYCFCTKERLDMLRENSESLGRPHKYDKHCSHLSKEEIEENLKAGIPFVIRQNNPNKGTTYFEDEIFGKITVDNSELDDMVLIKSDGFPTYNFANVVDDHLMGITHVVRGSEYLSSSPKYNRLYDAFGWDVPKYIHCPPIMKDSHSKLSKRNGDASFQDLLEKGYLKDAILNYIALLGWNPGTTEEIFSLEDLIGKFDYKSINKAPAIFDNKKLKWMNGEYIRMFSLEEFHKLALPYYKGVITKDFDLLKISELLHTRTELLSEIPEQVDFFDELPEYSCDLYVHKKMKTNFENSLESLEKALPVLESIDNWNTETIHDSIMELIKELEVKNGIVLWPIRTAVSGKKFTPGGAFEIAEILGKEETLKRVKIGIEKLKNEINQ.

The 'HIGH' region signature appears at 12 to 22; sequence PSPTGYMHVGN. Residues C109, C111, C136, and H138 each coordinate Zn(2+). Residues 253–257 carry the 'KMSKS' region motif; it reads KLSKR. K256 is an ATP binding site.

This sequence belongs to the class-I aminoacyl-tRNA synthetase family. Glutamate--tRNA ligase type 1 subfamily. As to quaternary structure, monomer. Zn(2+) serves as cofactor.

It localises to the cytoplasm. It catalyses the reaction tRNA(Glu) + L-glutamate + ATP = L-glutamyl-tRNA(Glu) + AMP + diphosphate. Functionally, catalyzes the attachment of glutamate to tRNA(Glu) in a two-step reaction: glutamate is first activated by ATP to form Glu-AMP and then transferred to the acceptor end of tRNA(Glu). The polypeptide is Glutamate--tRNA ligase (Clostridium tetani (strain Massachusetts / E88)).